The sequence spans 718 residues: Methionine--tRNA ligase (718 aa).

The short motif at 27–37 (PYANGQIHIGH) is the 'HIGH' region element. Residues Cys158, Cys161, Cys171, and Cys174 each contribute to the Zn(2+) site. A 'KMSKS' region motif is present at residues 348-352 (KMSKS). Residue Lys351 participates in ATP binding. The tRNA-binding domain occupies 612–718 (DFAKIDLRIA…SGAKPGMRVK (107 aa)).

The protein belongs to the class-I aminoacyl-tRNA synthetase family. MetG type 1 subfamily. Homodimer. Zn(2+) serves as cofactor.

The protein localises to the cytoplasm. The enzyme catalyses tRNA(Met) + L-methionine + ATP = L-methionyl-tRNA(Met) + AMP + diphosphate. Functionally, is required not only for elongation of protein synthesis but also for the initiation of all mRNA translation through initiator tRNA(fMet) aminoacylation. This Burkholderia thailandensis (strain ATCC 700388 / DSM 13276 / CCUG 48851 / CIP 106301 / E264) protein is Methionine--tRNA ligase.